A 60-amino-acid polypeptide reads, in one-letter code: Myrmicitoxin(1)-Pr4b (60 aa).

A signal peptide spans 1-23 (MKAIIFLFAVLTVVAIIIPIISG). Positions 24–33 (EPNAGPHAAS) are excised as a propeptide. Glutamine amide is present on glutamine 59.

The protein belongs to the formicidae venom clade 2 family. In terms of tissue distribution, expressed by the venom gland.

Its subcellular location is the secreted. Its function is as follows. Toxin that causes a rapid and irreversible paralysis when intrathoracically injected into insects (blowflies). Does not cause spontaneous nocifensive behaviors by intraplantar injection in mice. This Pogonomyrmex rugosus (Desert harvester ant) protein is Myrmicitoxin(1)-Pr4b.